We begin with the raw amino-acid sequence, 117 residues long: Large ribosomal subunit protein bL20 (117 aa).

The protein belongs to the bacterial ribosomal protein bL20 family.

Binds directly to 23S ribosomal RNA and is necessary for the in vitro assembly process of the 50S ribosomal subunit. It is not involved in the protein synthesizing functions of that subunit. The sequence is that of Large ribosomal subunit protein bL20 from Geobacter sulfurreducens (strain ATCC 51573 / DSM 12127 / PCA).